We begin with the raw amino-acid sequence, 200 residues long: Protein GrpE (200 aa).

The segment covering 1–10 (MQEKDSKDVT) has biased composition (basic and acidic residues). The segment at 1–57 (MQEKDSKDVTMEDEETIASQEEIEVEGNSEESSKEEESNNSEISDENLSEENLKLKD) is disordered. The span at 11–29 (MEDEETIASQEEIEVEGNS) shows a compositional bias: acidic residues.

Belongs to the GrpE family. In terms of assembly, homodimer.

It is found in the cytoplasm. Its function is as follows. Participates actively in the response to hyperosmotic and heat shock by preventing the aggregation of stress-denatured proteins, in association with DnaK and GrpE. It is the nucleotide exchange factor for DnaK and may function as a thermosensor. Unfolded proteins bind initially to DnaJ; upon interaction with the DnaJ-bound protein, DnaK hydrolyzes its bound ATP, resulting in the formation of a stable complex. GrpE releases ADP from DnaK; ATP binding to DnaK triggers the release of the substrate protein, thus completing the reaction cycle. Several rounds of ATP-dependent interactions between DnaJ, DnaK and GrpE are required for fully efficient folding. The sequence is that of Protein GrpE from Clostridium acetobutylicum (strain ATCC 824 / DSM 792 / JCM 1419 / IAM 19013 / LMG 5710 / NBRC 13948 / NRRL B-527 / VKM B-1787 / 2291 / W).